The chain runs to 159 residues: ATP synthase subunit b (159 aa).

The helical transmembrane segment at 2–22 (NISIPQIIAAILNFIILLLIV) threads the bilayer.

The protein belongs to the ATPase B chain family. In terms of assembly, F-type ATPases have 2 components, F(1) - the catalytic core - and F(0) - the membrane proton channel. F(1) has five subunits: alpha(3), beta(3), gamma(1), delta(1), epsilon(1). F(0) has three main subunits: a(1), b(2) and c(10-14). The alpha and beta chains form an alternating ring which encloses part of the gamma chain. F(1) is attached to F(0) by a central stalk formed by the gamma and epsilon chains, while a peripheral stalk is formed by the delta and b chains.

It is found in the cell membrane. Functionally, f(1)F(0) ATP synthase produces ATP from ADP in the presence of a proton or sodium gradient. F-type ATPases consist of two structural domains, F(1) containing the extramembraneous catalytic core and F(0) containing the membrane proton channel, linked together by a central stalk and a peripheral stalk. During catalysis, ATP synthesis in the catalytic domain of F(1) is coupled via a rotary mechanism of the central stalk subunits to proton translocation. Its function is as follows. Component of the F(0) channel, it forms part of the peripheral stalk, linking F(1) to F(0). The protein is ATP synthase subunit b of Clostridium botulinum (strain Loch Maree / Type A3).